Reading from the N-terminus, the 432-residue chain is Trigger factor (432 aa).

In terms of domain architecture, PPIase FKBP-type spans 161-246; the sequence is EDRVTIDFTG…LKKVEERELP (86 aa).

The protein belongs to the FKBP-type PPIase family. Tig subfamily.

The protein resides in the cytoplasm. It catalyses the reaction [protein]-peptidylproline (omega=180) = [protein]-peptidylproline (omega=0). Functionally, involved in protein export. Acts as a chaperone by maintaining the newly synthesized protein in an open conformation. Functions as a peptidyl-prolyl cis-trans isomerase. The polypeptide is Trigger factor (Klebsiella pneumoniae (strain 342)).